The following is a 178-amino-acid chain: UPF0114 protein in repA1-repA2 intergenic region (178 aa).

Transmembrane regions (helical) follow at residues 14-34 (WLIF…TLKF), 53-73 (LILV…LVMV), and 136-156 (WYVI…YIDR).

The protein belongs to the UPF0114 family.

It is found in the cell membrane. This Buchnera aphidicola subsp. Tetraneura caerulescens protein is UPF0114 protein in repA1-repA2 intergenic region.